Here is a 1019-residue protein sequence, read N- to C-terminus: Vacuolar membrane protease (1019 aa).

Topologically, residues 1 to 69 are cytoplasmic; it reads MFLEINFYST…DRIPTVVGFR (69 aa). Residues 70-90 traverse the membrane as a helical segment; it reads VIPTTVLVLLTYLTIFTLVIV. Over 91-404 the chain is Vacuolar; sequence TDWLPEPPKN…AELVIFYLND (314 aa). The N-linked (GlcNAc...) asparagine glycan is linked to N158. Residues H195 and D207 each coordinate Zn(2+). E239 (proton acceptor) is an active-site residue. Position 240 (E240) interacts with Zn(2+). N256 carries N-linked (GlcNAc...) asparagine glycosylation. The Zn(2+) site is built by E265 and H341. The helical transmembrane segment at 405–425 threads the bilayer; sequence LLIYNVVSLVVGPISLIFFVV. Over 426 to 466 the chain is Cytoplasmic; sequence CEYVLRNERARQPNGHPVSRPSVLEWLKQRSWLRALWRRSK. The chain crosses the membrane as a helical span at residues 467–487; it reads FWIALVITIALQALLVWGYLA. The Vacuolar segment spans residues 488 to 497; it reads FNSFTVYSSP. The chain crosses the membrane as a helical span at residues 498–518; it reads YLVLISFFSLAYLSLVIPLTF. Over 519-539 the chain is Cytoplasmic; that stretch reads TFNQTQSPTAKYIAPEREKHT. The chain crosses the membrane as a helical span at residues 540 to 560; it reads LLIQVYIFTWILLLFSTIAVA. The Vacuolar portion of the chain corresponds to 561-565; the sequence is RAQVG. Residues 566 to 586 form a helical membrane-spanning segment; the sequence is GLYFVTAWNTGVWIACLLAAV. Residues 587–651 lie on the Cytoplasmic side of the membrane; that stretch reads EGMMLPVPQG…ASLRKPQEGG (65 aa). Residues 603–634 form a disordered region; it reads HSAHHHHHHEHEEDQDADDDDREQRQPPTEAT. A helical transmembrane segment spans residues 652–672; it reads VVGWWIVHLLLTIPAPVLLIA. The Vacuolar portion of the chain corresponds to 673-692; the sequence is QMGSLLLDSLPQTLADGSPA. A helical transmembrane segment spans residues 693–713; sequence YVVYAAASLTAVLLAVPLTPF. Residues 714 to 719 lie on the Cytoplasmic side of the membrane; sequence SGKLHR. A helical membrane pass occupies residues 720–740; that stretch reads GLFFLFFLSFLIVTAYLWLAF. The Vacuolar segment spans residues 741–1019; that stretch reads PFSSADPLKV…LVEAWSPFSV (279 aa). N774 carries an N-linked (GlcNAc...) asparagine glycan.

This sequence belongs to the peptidase M28 family. Zn(2+) is required as a cofactor.

It is found in the vacuole membrane. In terms of biological role, may be involved in vacuolar sorting and osmoregulation. This Laccaria bicolor (strain S238N-H82 / ATCC MYA-4686) (Bicoloured deceiver) protein is Vacuolar membrane protease.